A 426-amino-acid polypeptide reads, in one-letter code: uncharacterized protein (426 aa).

His-277 contributes to the Zn(2+) binding site. Glu-278 is a catalytic residue. Zn(2+) contacts are provided by His-281 and Glu-357.

Belongs to the peptidase M48B family. Requires Zn(2+) as cofactor.

This is an uncharacterized protein from Bacillus subtilis (strain 168).